A 72-amino-acid polypeptide reads, in one-letter code: NAD(P)H-quinone oxidoreductase subunit O (72 aa).

The protein belongs to the complex I NdhO subunit family. As to quaternary structure, NDH-1 can be composed of about 15 different subunits; different subcomplexes with different compositions have been identified which probably have different functions.

Its subcellular location is the cellular thylakoid membrane. It carries out the reaction a plastoquinone + NADH + (n+1) H(+)(in) = a plastoquinol + NAD(+) + n H(+)(out). It catalyses the reaction a plastoquinone + NADPH + (n+1) H(+)(in) = a plastoquinol + NADP(+) + n H(+)(out). NDH-1 shuttles electrons from an unknown electron donor, via FMN and iron-sulfur (Fe-S) centers, to quinones in the respiratory and/or the photosynthetic chain. The immediate electron acceptor for the enzyme in this species is believed to be plastoquinone. Couples the redox reaction to proton translocation, and thus conserves the redox energy in a proton gradient. Cyanobacterial NDH-1 also plays a role in inorganic carbon-concentration. This Synechococcus sp. (strain JA-3-3Ab) (Cyanobacteria bacterium Yellowstone A-Prime) protein is NAD(P)H-quinone oxidoreductase subunit O.